The chain runs to 332 residues: Cysteine and histidine-rich domain-containing protein 1 (332 aa).

At alanine 2 the chain carries N-acetylalanine. Residues 2 to 77 (ALLCYNRGCG…KPPEPVKPEV (76 aa)) form an interaction with PPP5C region. Zn(2+)-binding residues include cysteine 5, cysteine 10, cysteine 24, histidine 27, cysteine 42, and cysteine 43. CHORD domains follow at residues 5-64 (CYNR…KGRH) and 157-216 (CKNG…TGKH). At threonine 47 the chain carries Phosphothreonine. Serine 51 carries the phosphoserine modification. Zn(2+) is bound by residues cysteine 59, histidine 64, cysteine 157, cysteine 162, cysteine 176, histidine 179, cysteine 194, cysteine 195, cysteine 211, and histidine 216. Residues 62-82 (GRHNSEKPPEPVKPEVKTTEK) are disordered. Over residues 64 to 82 (HNSEKPPEPVKPEVKTTEK) the composition is skewed to basic and acidic residues. Residues 65–316 (NSEKPPEPVK…AEPMQWASLE (252 aa)) form an interaction with HSP90AA1 and HSP90AB1 region. A CS domain is found at 227–316 (VVPCRHDWHQ…AEPMQWASLE (90 aa)).

As to quaternary structure, interacts with HSP90AA1, HSP90AB1, PPP5C, ROCK1 and ROCK2.

Functionally, regulates centrosome duplication, probably by inhibiting the kinase activity of ROCK2. Proposed to act as co-chaperone for HSP90. May play a role in the regulation of NOD1 via a HSP90 chaperone complex. In vitro, has intrinsic chaperone activity. This function may be achieved by inhibiting association of ROCK2 with NPM1. Plays a role in ensuring the localization of the tyrosine kinase receptor EGFR to the plasma membrane, and thus ensures the subsequent regulation of EGFR activity and EGF-induced actin cytoskeleton remodeling. Involved in stress response. Prevents tumorigenesis. The chain is Cysteine and histidine-rich domain-containing protein 1 (CHORDC1) from Bos taurus (Bovine).